We begin with the raw amino-acid sequence, 118 residues long: D-dopachrome decarboxylase (118 aa).

At Pro2 the chain carries N-acetylproline. The residue at position 33 (Lys33) is an N6-acetyllysine. Ser90 carries the post-translational modification Phosphoserine.

It belongs to the MIF family. Homotrimer.

The protein localises to the cytoplasm. The enzyme catalyses D-dopachrome + H(+) = 5,6-dihydroxyindole + CO2. Tautomerization of D-dopachrome with decarboxylation to give 5,6-dihydroxyindole (DHI). The chain is D-dopachrome decarboxylase (Ddt) from Mus musculus (Mouse).